The primary structure comprises 192 residues: Transcription termination/antitermination protein NusG (192 aa).

The KOW domain occupies 140 to 168 (VGEIVTVTDGPFETFMGTVEEIDQEKNRL).

The protein belongs to the NusG family.

In terms of biological role, participates in transcription elongation, termination and antitermination. The protein is Transcription termination/antitermination protein NusG of Rickettsia conorii (strain ATCC VR-613 / Malish 7).